Here is a 544-residue protein sequence, read N- to C-terminus: Chaperonin GroEL 2 (544 aa).

ATP-binding positions include 29-32, 86-90, Gly-413, and Asp-495; these read TLGP and DGTTT. The interval 525 to 544 is disordered; that stretch reads PEPKSNKPAGGGGGVDDYDY. Residues 533–544 are compositionally biased toward gly residues; the sequence is AGGGGGVDDYDY.

It belongs to the chaperonin (HSP60) family. Forms a cylinder of 14 subunits composed of two heptameric rings stacked back-to-back. Interacts with the co-chaperonin GroES.

Its subcellular location is the cytoplasm. The catalysed reaction is ATP + H2O + a folded polypeptide = ADP + phosphate + an unfolded polypeptide.. In terms of biological role, together with its co-chaperonin GroES, plays an essential role in assisting protein folding. The GroEL-GroES system forms a nano-cage that allows encapsulation of the non-native substrate proteins and provides a physical environment optimized to promote and accelerate protein folding. This is Chaperonin GroEL 2 from Synechococcus sp. (strain JA-3-3Ab) (Cyanobacteria bacterium Yellowstone A-Prime).